A 105-amino-acid chain; its full sequence is MKPFVLVLFALLALLQYRLWFGENSLTEYFTLKDRISHQQSGNAELLERNEVLKEEIQDLKSGTEALEERARNELGLIEQGETFFRVVGNDSRSIRSSEQSQDNQ.

Residues 1 to 3 (MKP) lie on the Cytoplasmic side of the membrane. The chain crosses the membrane as a helical span at residues 4–21 (FVLVLFALLALLQYRLWF). The Periplasmic segment spans residues 22-105 (GENSLTEYFT…RSSEQSQDNQ (84 aa)). The stretch at 38–75 (HQQSGNAELLERNEVLKEEIQDLKSGTEALEERARNEL) forms a coiled coil.

Belongs to the FtsB family. In terms of assembly, part of a complex composed of FtsB, FtsL and FtsQ.

The protein localises to the cell inner membrane. Essential cell division protein. May link together the upstream cell division proteins, which are predominantly cytoplasmic, with the downstream cell division proteins, which are predominantly periplasmic. This chain is Cell division protein FtsB, found in Shewanella amazonensis (strain ATCC BAA-1098 / SB2B).